A 135-amino-acid chain; its full sequence is ATP synthase epsilon chain (135 aa).

Basic and acidic residues predominate over residues 89-100 (SGKAEAELEKAK). The segment at 89 to 114 (SGKAEAELEKAKNQLSQNKDQGNSPE) is disordered. Over residues 101-112 (NQLSQNKDQGNS) the composition is skewed to polar residues.

The protein belongs to the ATPase epsilon chain family. As to quaternary structure, F-type ATPases have 2 components, CF(1) - the catalytic core - and CF(0) - the membrane proton channel. CF(1) has five subunits: alpha(3), beta(3), gamma(1), delta(1), epsilon(1). CF(0) has three main subunits: a, b and c.

It localises to the cellular thylakoid membrane. Produces ATP from ADP in the presence of a proton gradient across the membrane. This chain is ATP synthase epsilon chain, found in Prochlorococcus marinus (strain NATL2A).